The following is a 500-amino-acid chain: Inner membrane transporter YjeM (500 aa).

At 1 to 7 the chain is on the cytoplasmic side; the sequence is MPHTIKK. Residues 8-28 form a helical membrane-spanning segment; the sequence is MSLIGLILMIFTSVFGFANSP. At 29–37 the chain is on the periplasmic side; the sequence is SAYYLMGYS. A helical transmembrane segment spans residues 38-58; sequence AIPFYIFSALLFFIPFALMMA. Topologically, residues 59 to 82 are cytoplasmic; the sequence is EMGAAYRKEEGGIYSWMNNSVGPR. The helical transmembrane segment at 83-103 threads the bilayer; it reads FAFIGTFMWFSSYIIWMVSTS. The Periplasmic portion of the chain corresponds to 104-132; the sequence is AKVWVPFSTFLYGSDMTQHWRIAGLEPTQ. Residues 133 to 153 form a helical membrane-spanning segment; that stretch reads VVGLLAVAWMILVTVVASKGI. Over 154–163 the chain is Cytoplasmic; the sequence is NKIARITAVG. Residues 164–184 traverse the membrane as a helical segment; that stretch reads GIAVMCLNLVLLLVSITILLL. At 185 to 209 the chain is on the periplasmic side; sequence NGGHFAQDINFLASPNPGYQSGLAM. A helical membrane pass occupies residues 210–230; sequence LSFVVFAIFAYGGIEAVGGLV. Residues 231–243 are Cytoplasmic-facing; the sequence is DKTENPEKNFAKG. Residues 244–264 traverse the membrane as a helical segment; that stretch reads IVFAAIVISIGYSLAIFLWGV. At 265 to 319 the chain is on the periplasmic side; that stretch reads STNWQQVLSNGSVNLGNITYVLMKSLGMTLGNALHLSPEASLSLGVWFARITGLS. A helical membrane pass occupies residues 320–340; the sequence is MFLAYTGAFFTLCYSPLKAII. Over 341 to 369 the chain is Cytoplasmic; the sequence is QGTPKALWPEPMTRLNAMGMPSIAMWMQC. The chain crosses the membrane as a helical span at residues 370-390; that stretch reads GLVTVFILLVSFGGGTASAFF. Residues 391-394 are Periplasmic-facing; that stretch reads NKLT. A helical transmembrane segment spans residues 395–415; that stretch reads LMANVSMTLPYLFLALAFPFF. Residues 416 to 433 lie on the Cytoplasmic side of the membrane; that stretch reads KARQDLDRPFVIFKTHLS. The chain crosses the membrane as a helical span at residues 434–454; that stretch reads AMIATVVVVLVVTFANVFTII. Over 455 to 462 the chain is Periplasmic; it reads QPVVEAGD. Residues 463–483 traverse the membrane as a helical segment; the sequence is WDSTLWMIGGPVFFSLLAMAI. At 484–500 the chain is on the cytoplasmic side; it reads YQNYCSRVAKNPQWAVE.

This sequence belongs to the amino acid-polyamine-organocation (APC) superfamily.

The protein resides in the cell inner membrane. This Escherichia coli (strain K12) protein is Inner membrane transporter YjeM (yjeM).